The sequence spans 119 residues: Large ribosomal subunit protein uL18 (119 aa).

It belongs to the universal ribosomal protein uL18 family. In terms of assembly, part of the 50S ribosomal subunit; part of the 5S rRNA/L5/L18/L25 subcomplex. Contacts the 5S and 23S rRNAs.

Its function is as follows. This is one of the proteins that bind and probably mediate the attachment of the 5S RNA into the large ribosomal subunit, where it forms part of the central protuberance. In Clostridium botulinum (strain Loch Maree / Type A3), this protein is Large ribosomal subunit protein uL18.